A 201-amino-acid polypeptide reads, in one-letter code: Putative toxin HigB2 (201 aa).

It belongs to the mycobacterial HigB family.

Its function is as follows. Putative toxic component of a type II toxin-antitoxin (TA) system. Its cognate antitoxin would be HigA2. This is Putative toxin HigB2 from Mycobacterium tuberculosis (strain ATCC 25618 / H37Rv).